The primary structure comprises 453 residues: Tol-Pal system protein TolB (453 aa).

Positions 1–34 are cleaved as a signal peptide; the sequence is MYLIIKKTHKLPHWLQKVSLSIMLIIFLWKPALL.

It belongs to the TolB family. As to quaternary structure, the Tol-Pal system is composed of five core proteins: the inner membrane proteins TolA, TolQ and TolR, the periplasmic protein TolB and the outer membrane protein Pal. They form a network linking the inner and outer membranes and the peptidoglycan layer.

It localises to the periplasm. Part of the Tol-Pal system, which plays a role in outer membrane invagination during cell division and is important for maintaining outer membrane integrity. TolB occupies a key intermediary position in the Tol-Pal system because it communicates directly with both membrane-embedded components, Pal in the outer membrane and TolA in the inner membrane. This is Tol-Pal system protein TolB from Blochmanniella pennsylvanica (strain BPEN).